The following is a 235-amino-acid chain: 7-cyano-7-deazaguanine synthase (235 aa).

ATP is bound at residue 11 to 21 (FSGGQDSTTCV). The Zn(2+) site is built by Cys-199, Cys-214, Cys-217, and Cys-220.

The protein belongs to the QueC family. Requires Zn(2+) as cofactor.

The enzyme catalyses 7-carboxy-7-deazaguanine + NH4(+) + ATP = 7-cyano-7-deazaguanine + ADP + phosphate + H2O + H(+). It participates in purine metabolism; 7-cyano-7-deazaguanine biosynthesis. In terms of biological role, catalyzes the ATP-dependent conversion of 7-carboxy-7-deazaguanine (CDG) to 7-cyano-7-deazaguanine (preQ(0)). The chain is 7-cyano-7-deazaguanine synthase from Janthinobacterium sp. (strain Marseille) (Minibacterium massiliensis).